Reading from the N-terminus, the 145-residue chain is D-aminoacyl-tRNA deacylase (145 aa).

Positions 137–138 (GP) match the Gly-cisPro motif, important for rejection of L-amino acids motif.

Belongs to the DTD family. Homodimer.

The protein resides in the cytoplasm. It catalyses the reaction glycyl-tRNA(Ala) + H2O = tRNA(Ala) + glycine + H(+). The catalysed reaction is a D-aminoacyl-tRNA + H2O = a tRNA + a D-alpha-amino acid + H(+). Functionally, an aminoacyl-tRNA editing enzyme that deacylates mischarged D-aminoacyl-tRNAs. Also deacylates mischarged glycyl-tRNA(Ala), protecting cells against glycine mischarging by AlaRS. Acts via tRNA-based rather than protein-based catalysis; rejects L-amino acids rather than detecting D-amino acids in the active site. By recycling D-aminoacyl-tRNA to D-amino acids and free tRNA molecules, this enzyme counteracts the toxicity associated with the formation of D-aminoacyl-tRNA entities in vivo and helps enforce protein L-homochirality. The chain is D-aminoacyl-tRNA deacylase from Escherichia coli O81 (strain ED1a).